Consider the following 391-residue polypeptide: Phosphoglycerate kinase (391 aa).

Substrate-binding positions include 21 to 23 (DFN), Arg-41, 64 to 67 (HLGR), Arg-121, and Arg-154. Residues Lys-205, Glu-322, and 348-351 (GGDS) each bind ATP.

It belongs to the phosphoglycerate kinase family. Monomer.

The protein resides in the cytoplasm. The enzyme catalyses (2R)-3-phosphoglycerate + ATP = (2R)-3-phospho-glyceroyl phosphate + ADP. The protein operates within carbohydrate degradation; glycolysis; pyruvate from D-glyceraldehyde 3-phosphate: step 2/5. The sequence is that of Phosphoglycerate kinase from Solibacter usitatus (strain Ellin6076).